The primary structure comprises 356 residues: Protein-L-isoaspartate O-methyltransferase domain-containing protein 1 (356 aa).

G2 is lipidated: N-myristoyl glycine. The active site involves S64. AdoMet binding motif regions lie at residues 85–94 (LNLGSGTGYL), 160–164 (YDRIY), and 181–191 (LKVGGILVMPI). Residues 240–250 (VRNLQDLARIY) are BC-box. A disordered region spans residues 299–331 (PLDSEEDEKMEEDKEEEEKEPGEALKPEEPPQN). A compositionally biased stretch (acidic residues) spans 301 to 318 (DSEEDEKMEEDKEEEEKE). Positions 319-331 (PGEALKPEEPPQN) are enriched in basic and acidic residues. The CUL-box stretch occupies residues 340–343 (LPLP).

The protein belongs to the methyltransferase superfamily. L-isoaspartyl/D-aspartyl protein methyltransferase family. As to quaternary structure, component of the probable ECS(PCMTD1) E3 ubiquitin-protein ligase complex, at least composed of CUL5, ELOB, ELOC, RBX2 and PCMTD1. Interacts (via the BC-box) with ELOB and ELOC; the interaction is direct and stabilizes PCMTD1.

The protein localises to the cytoplasm. It localises to the membrane. In terms of biological role, substrate recognition component of an ECS (Elongin BC-CUL5-SOCS-box protein) E3 ubiquitin ligase complex which mediates the ubiquitination and subsequent proteasomal degradation of target proteins. Specifically binds to the methyltransferase cofactor S-adenosylmethionine (AdoMet) via the N-terminal AdoMet binding motif, but does not display methyltransferase activity. May provide an alternate maintenance pathway for modified proteins by acting as a damage-specific E3 ubiquitin ligase adaptor protein. The sequence is that of Protein-L-isoaspartate O-methyltransferase domain-containing protein 1 (PCMTD1) from Bos taurus (Bovine).